A 320-amino-acid polypeptide reads, in one-letter code: RNA-binding protein Musashi homolog 1 (320 aa).

The segment covering 1-14 has biased composition (low complexity); the sequence is MTTTVSTGATAVAT. Residues 1–48 are disordered; sequence MTTTVSTGATAVATLRETSPPVDGHEEARLNADSDDGSHGSQDPGKMF. Phosphothreonine is present on threonine 18. Phosphoserine is present on residues serine 19 and serine 34. Positions 23-38 are enriched in basic and acidic residues; it reads DGHEEARLNADSDDGS. RRM domains follow at residues 45–124 and 134–211; these read GKMF…FPKR and KKVF…KAQP. Required for binding to target mRNAs stretches follow at residues 88–93 and 177–182; these read FGFITF and FGFVTF.

It belongs to the Musashi family. Expressed in the gut and in AVA, AFD, RMD, RMED, RMEV, RMER and RMEL neurons (at protein level). In the tail expressed in neurons and all the ray sensilla. Expressed in male specific C1-C4 neurons.

The protein resides in the cytoplasm. It localises to the perikaryon. RNA binding protein that regulates the expression of target mRNAs at the translation level. Binds RNA containing the 5'-[GA]U(1-3)AGU-3' motif located in the 3' UTR of the target mRNA. Binds to the mRNA of three Arp2/3 complex components arx-1, arx-2 and arx-3 and negatively regulates their translation during association learning. Plays a role in time-dependent memory loss and the retention of conditioned behavior over time, probably through negative regulation of the Arp2/3 actin cytoskeleton branching complex and regulation of synapse size. Required for two aspects of male mating behavior: turning around the hermaphrodite head or tail and vulva location. This Caenorhabditis elegans protein is RNA-binding protein Musashi homolog 1.